A 507-amino-acid chain; its full sequence is Maturase K (507 aa).

It belongs to the intron maturase 2 family. MatK subfamily.

It localises to the plastid. The protein resides in the chloroplast. Functionally, usually encoded in the trnK tRNA gene intron. Probably assists in splicing its own and other chloroplast group II introns. The chain is Maturase K from Lyonia ligustrina (Maleberry).